We begin with the raw amino-acid sequence, 189 residues long: Movement protein (189 aa).

The protein belongs to the tombusvirus/aureusvirus movement protein p22 family. Interacts with host protein HFI22. In terms of processing, phosphorylated.

The protein localises to the host membrane. Its function is as follows. Transports viral genome to neighboring plant cells directly through plasmosdesmata, without any budding. The movement protein allows efficient cell to cell propagation, by bypassing the host cell wall barrier. Displays RNA-binding activity. In Capsicum annuum (Capsicum pepper), this protein is Movement protein.